Reading from the N-terminus, the 89-residue chain is Porphobilinogen deaminase (89 aa).

It belongs to the HMBS family. Monomer. Dipyrromethane serves as cofactor.

It catalyses the reaction 4 porphobilinogen + H2O = hydroxymethylbilane + 4 NH4(+). Its pathway is porphyrin-containing compound metabolism; protoporphyrin-IX biosynthesis; coproporphyrinogen-III from 5-aminolevulinate: step 2/4. Tetrapolymerization of the monopyrrole PBG into the hydroxymethylbilane pre-uroporphyrinogen in several discrete steps. The chain is Porphobilinogen deaminase (hemC) from Dickeya chrysanthemi (Pectobacterium chrysanthemi).